Consider the following 356-residue polypeptide: UDP-N-acetylglucosamine--N-acetylmuramyl-(pentapeptide) pyrophosphoryl-undecaprenol N-acetylglucosamine transferase (356 aa).

UDP-N-acetyl-alpha-D-glucosamine-binding positions include 12–14 (TGG), N124, R163, S188, I242, and Q287.

The protein belongs to the glycosyltransferase 28 family. MurG subfamily.

The protein localises to the cell inner membrane. The enzyme catalyses di-trans,octa-cis-undecaprenyl diphospho-N-acetyl-alpha-D-muramoyl-L-alanyl-D-glutamyl-meso-2,6-diaminopimeloyl-D-alanyl-D-alanine + UDP-N-acetyl-alpha-D-glucosamine = di-trans,octa-cis-undecaprenyl diphospho-[N-acetyl-alpha-D-glucosaminyl-(1-&gt;4)]-N-acetyl-alpha-D-muramoyl-L-alanyl-D-glutamyl-meso-2,6-diaminopimeloyl-D-alanyl-D-alanine + UDP + H(+). Its pathway is cell wall biogenesis; peptidoglycan biosynthesis. Cell wall formation. Catalyzes the transfer of a GlcNAc subunit on undecaprenyl-pyrophosphoryl-MurNAc-pentapeptide (lipid intermediate I) to form undecaprenyl-pyrophosphoryl-MurNAc-(pentapeptide)GlcNAc (lipid intermediate II). This chain is UDP-N-acetylglucosamine--N-acetylmuramyl-(pentapeptide) pyrophosphoryl-undecaprenol N-acetylglucosamine transferase, found in Pseudomonas syringae pv. syringae (strain B728a).